We begin with the raw amino-acid sequence, 234 residues long: Ubiquinone biosynthesis O-methyltransferase (234 aa).

Arg36, Gly56, Asp77, and Met125 together coordinate S-adenosyl-L-methionine.

This sequence belongs to the methyltransferase superfamily. UbiG/COQ3 family.

The enzyme catalyses a 3-demethylubiquinol + S-adenosyl-L-methionine = a ubiquinol + S-adenosyl-L-homocysteine + H(+). The catalysed reaction is a 3-(all-trans-polyprenyl)benzene-1,2-diol + S-adenosyl-L-methionine = a 2-methoxy-6-(all-trans-polyprenyl)phenol + S-adenosyl-L-homocysteine + H(+). It functions in the pathway cofactor biosynthesis; ubiquinone biosynthesis. Functionally, O-methyltransferase that catalyzes the 2 O-methylation steps in the ubiquinone biosynthetic pathway. The protein is Ubiquinone biosynthesis O-methyltransferase of Actinobacillus pleuropneumoniae serotype 7 (strain AP76).